The chain runs to 189 residues: Small heat shock protein 21 (189 aa).

Positions 26–53 (PPNFNPRKIAQGDNGKGQQVSRYGAGAG) are disordered. Positions 77-183 (KYFVGFDDNV…HEKIVNIPIS (107 aa)) constitute a sHSP domain.

This sequence belongs to the small heat shock protein (HSP20) family.

Heat shock protein required for pathogenicity. Mediates thermotolerance and adaptation to oxidative stress and ethanol-induced stress. Required for invasive growth and filament formation under various filament inducing conditions. Plays a role in the capacity of damaging human-derived endothelial and oral epithelial cells during infection. Potentiates resistance to antifungal drugs, as well as resistance to killing by human neutrophils. Plays a major role in trehalose homeostasis in response to elevated temperatures. Regulates CEK1 activation by phosphorylation in response to elevated temperatures. This chain is Small heat shock protein 21 (HSP21), found in Candida albicans (strain SC5314 / ATCC MYA-2876) (Yeast).